The primary structure comprises 141 residues: ATP synthase epsilon chain (141 aa).

Belongs to the ATPase epsilon chain family. F-type ATPases have 2 components, CF(1) - the catalytic core - and CF(0) - the membrane proton channel. CF(1) has five subunits: alpha(3), beta(3), gamma(1), delta(1), epsilon(1). CF(0) has three main subunits: a, b and c.

It is found in the cell inner membrane. In terms of biological role, produces ATP from ADP in the presence of a proton gradient across the membrane. In Dechloromonas aromatica (strain RCB), this protein is ATP synthase epsilon chain.